The primary structure comprises 239 residues: Protein Thf1 (239 aa).

A coiled-coil region spans residues 183–221 (ERVRKDLELYRSSLDRMKQARAVVEEMVKAARRQQERRQ). The segment covering 211–221 (KAARRQQERRQ) has biased composition (basic and acidic residues). The segment at 211–239 (KAARRQQERRQSAASLPETSLGDPSKPGS) is disordered.

Belongs to the THF1 family.

In terms of biological role, may be involved in photosynthetic membrane biogenesis. The polypeptide is Protein Thf1 (Synechococcus sp. (strain JA-2-3B'a(2-13)) (Cyanobacteria bacterium Yellowstone B-Prime)).